The following is a 505-amino-acid chain: Lysine--tRNA ligase (505 aa).

Mg(2+)-binding residues include E415 and E422.

The protein belongs to the class-II aminoacyl-tRNA synthetase family. Homodimer. Mg(2+) serves as cofactor.

Its subcellular location is the cytoplasm. It catalyses the reaction tRNA(Lys) + L-lysine + ATP = L-lysyl-tRNA(Lys) + AMP + diphosphate. In Salmonella typhi, this protein is Lysine--tRNA ligase.